A 175-amino-acid chain; its full sequence is NAD(P)H-quinone oxidoreductase subunit I, chloroplastic (175 aa).

2 consecutive 4Fe-4S ferredoxin-type domains span residues 55-84 and 95-124; these read GRIHFEFDKCIACEVCVRVCPINLPVVNWE and QTYSIDFGVCIFCGNCVEYCPTNCLSMTEE. [4Fe-4S] cluster is bound by residues C64, C67, C70, C74, C104, C107, C110, and C114.

It belongs to the complex I 23 kDa subunit family. NDH is composed of at least 16 different subunits, 5 of which are encoded in the nucleus. [4Fe-4S] cluster serves as cofactor.

The protein localises to the plastid. The protein resides in the chloroplast thylakoid membrane. It catalyses the reaction a plastoquinone + NADH + (n+1) H(+)(in) = a plastoquinol + NAD(+) + n H(+)(out). The catalysed reaction is a plastoquinone + NADPH + (n+1) H(+)(in) = a plastoquinol + NADP(+) + n H(+)(out). NDH shuttles electrons from NAD(P)H:plastoquinone, via FMN and iron-sulfur (Fe-S) centers, to quinones in the photosynthetic chain and possibly in a chloroplast respiratory chain. The immediate electron acceptor for the enzyme in this species is believed to be plastoquinone. Couples the redox reaction to proton translocation, and thus conserves the redox energy in a proton gradient. This Chlorokybus atmophyticus (Soil alga) protein is NAD(P)H-quinone oxidoreductase subunit I, chloroplastic.